The following is a 63-amino-acid chain: Laccase-C1 (63 aa).

The protein belongs to the multicopper oxidase family. In terms of assembly, monomer. Requires Cu cation as cofactor. In terms of processing, glycosylated; contains 16% carbohydrates.

Its subcellular location is the secreted. The catalysed reaction is 4 hydroquinone + O2 = 4 benzosemiquinone + 2 H2O. With respect to regulation, inhibited by sodium azide. Lignin degradation and detoxification of lignin-derived products. Oxidation of a broad range of substrates including mono-, di- and polyphenols, aromatic amines and methoxy-substituted phenols accompanied by reduction of oxygen to water. This chain is Laccase-C1, found in Cerrena unicolor (Canker rot fungus).